We begin with the raw amino-acid sequence, 115 residues long: UPF0738 protein SE_0694 (115 aa).

Belongs to the UPF0738 family.

This chain is UPF0738 protein SE_0694, found in Staphylococcus epidermidis (strain ATCC 12228 / FDA PCI 1200).